The sequence spans 307 residues: Transcription factor bHLH127 (307 aa).

Disordered stretches follow at residues 41–68 (SDPL…LPHQ) and 101–155 (PHPQ…AEMH). Residues 110–119 (APPPPKPPSS) show a composition bias toward pro residues. Positions 150-199 (RAAEMHNLAERRRREKINERMKTLQQLIPRCNKSTKVSMLEDVIEYVKSL) constitute a bHLH domain.

The protein belongs to the bHLH protein family. As to quaternary structure, homodimer.

It localises to the nucleus. The polypeptide is Transcription factor bHLH127 (BHLH127) (Arabidopsis thaliana (Mouse-ear cress)).